Reading from the N-terminus, the 433-residue chain is ATP-dependent protease ATPase subunit HslU (433 aa).

ATP contacts are provided by residues Ile18, 60–65, Asp246, Glu311, and Arg383; that span reads GVGKTE.

It belongs to the ClpX chaperone family. HslU subfamily. As to quaternary structure, a double ring-shaped homohexamer of HslV is capped on each side by a ring-shaped HslU homohexamer. The assembly of the HslU/HslV complex is dependent on binding of ATP.

It localises to the cytoplasm. ATPase subunit of a proteasome-like degradation complex; this subunit has chaperone activity. The binding of ATP and its subsequent hydrolysis by HslU are essential for unfolding of protein substrates subsequently hydrolyzed by HslV. HslU recognizes the N-terminal part of its protein substrates and unfolds these before they are guided to HslV for hydrolysis. This is ATP-dependent protease ATPase subunit HslU from Cereibacter sphaeroides (strain ATCC 17029 / ATH 2.4.9) (Rhodobacter sphaeroides).